Here is a 114-residue protein sequence, read N- to C-terminus: uncharacterized protein (114 aa).

2 helical membrane passes run 14–34 (VMSAIFKWLLLYSLPALCFLL) and 75–95 (VIIILVPCWWHAVIVTQHPVA).

It is found in the membrane. This is an uncharacterized protein from Homo sapiens (Human).